The sequence spans 308 residues: Glycine betaine uptake system ATP-binding protein YehX (308 aa).

One can recognise an ABC transporter domain in the interval 2-235; it reads IEFSHVSKLF…PANDFVRQFF (234 aa). 34–41 provides a ligand contact to ATP; that stretch reads GTSGSGKS.

This sequence belongs to the ABC transporter superfamily. As to quaternary structure, the complex is composed of two ATP-binding proteins (YehX), two transmembrane proteins (YehW and YehY) and a solute-binding protein (YehZ).

It catalyses the reaction glycine betaine(out) + ATP + H2O = glycine betaine(in) + ADP + phosphate + H(+). Functionally, part of an ABC transporter complex involved in low-affinity glycine betaine uptake. Probably responsible for energy coupling to the transport system. This Escherichia coli (strain K12) protein is Glycine betaine uptake system ATP-binding protein YehX (yehX).